Consider the following 668-residue polypeptide: Chitin synthase 8 (668 aa).

Positions 1 to 26 (MTSRMPTSGHRTSSSSSERGNMSVQQ) are enriched in polar residues. The tract at residues 1-62 (MTSRMPTSGH…PAPLRPGWTL (62 aa)) is disordered. N-linked (GlcNAc...) asparagine glycosylation is found at Asn-21, Asn-98, and Asn-101. 2 consecutive transmembrane segments (helical) span residues 136-156 (WSLIIGLAGINGALIYIGWKY) and 162-182 (FFLVLLSSNTVLQSFMCICII). N-linked (GlcNAc...) asparagine glycosylation is found at Asn-216 and Asn-476. 4 consecutive transmembrane segments (helical) span residues 522-542 (WALGSISNEFVMIFRPGIILI), 548-568 (LIAVITWAITPFIIAAFVELL), 583-603 (VFLGLICVLFFRYLYSFCIGF), and 615-635 (YFAGYVMHLFTSPFMNIIILV).

The protein belongs to the chitin synthase family. Class VIII subfamily.

The protein localises to the cell membrane. It localises to the cell septum. The enzyme catalyses [(1-&gt;4)-N-acetyl-beta-D-glucosaminyl](n) + UDP-N-acetyl-alpha-D-glucosamine = [(1-&gt;4)-N-acetyl-beta-D-glucosaminyl](n+1) + UDP + H(+). Polymerizes chitin, a structural polymer of the cell wall and septum, by transferring the sugar moiety of UDP-GlcNAc to the non-reducing end of the growing chitin polymer. Participated in the development of cell wall and plays a critical role in fungal response to environmental stresses. Necessary for pathogenicity and deoxinivalenol (DON) production. The polypeptide is Chitin synthase 8 (Gibberella zeae (strain ATCC MYA-4620 / CBS 123657 / FGSC 9075 / NRRL 31084 / PH-1) (Wheat head blight fungus)).